Consider the following 557-residue polypeptide: Dihydroxy-acid dehydratase (557 aa).

A Mg(2+)-binding site is contributed by Asp-78. [2Fe-2S] cluster is bound at residue Cys-119. Asp-120 and Lys-121 together coordinate Mg(2+). At Lys-121 the chain carries N6-carboxylysine. Cys-192 contributes to the [2Fe-2S] cluster binding site. Glu-442 provides a ligand contact to Mg(2+). The active-site Proton acceptor is the Ser-468.

It belongs to the IlvD/Edd family. Homodimer. [2Fe-2S] cluster serves as cofactor. Requires Mg(2+) as cofactor.

It catalyses the reaction (2R)-2,3-dihydroxy-3-methylbutanoate = 3-methyl-2-oxobutanoate + H2O. The enzyme catalyses (2R,3R)-2,3-dihydroxy-3-methylpentanoate = (S)-3-methyl-2-oxopentanoate + H2O. The protein operates within amino-acid biosynthesis; L-isoleucine biosynthesis; L-isoleucine from 2-oxobutanoate: step 3/4. It functions in the pathway amino-acid biosynthesis; L-valine biosynthesis; L-valine from pyruvate: step 3/4. In terms of biological role, functions in the biosynthesis of branched-chain amino acids. Catalyzes the dehydration of (2R,3R)-2,3-dihydroxy-3-methylpentanoate (2,3-dihydroxy-3-methylvalerate) into 2-oxo-3-methylpentanoate (2-oxo-3-methylvalerate) and of (2R)-2,3-dihydroxy-3-methylbutanoate (2,3-dihydroxyisovalerate) into 2-oxo-3-methylbutanoate (2-oxoisovalerate), the penultimate precursor to L-isoleucine and L-valine, respectively. The polypeptide is Dihydroxy-acid dehydratase (Bacillus cytotoxicus (strain DSM 22905 / CIP 110041 / 391-98 / NVH 391-98)).